A 146-amino-acid chain; its full sequence is Negative cofactor 2 complex subunit beta (146 aa).

The segment at 124-146 is disordered; sequence FRQSRSRLHHNSVSDPVKSEDSS. Phosphoserine occurs at positions 135, 137, and 142.

In terms of assembly, component of the NC2 (negative cofactor 2) complex composed of BUR6 and NCB2. The NC2 complex associates with SPT15/TBP. Interacts with SPT15/TBP.

The protein localises to the nucleus. Component of the NC2 complex which represses RNA polymerase II transcription through binding to SPT15/TBP and thereby inhibiting the assembly of the preinitiation complex. The NC2 complex may also mediate transcriptional activation from TATA-driven promoters through association with SPT15/TBP. This Saccharomyces cerevisiae (strain ATCC 204508 / S288c) (Baker's yeast) protein is Negative cofactor 2 complex subunit beta (NCB2).